The following is a 106-amino-acid chain: Large ribosomal subunit protein uL24 (106 aa).

This sequence belongs to the universal ribosomal protein uL24 family. As to quaternary structure, part of the 50S ribosomal subunit.

Functionally, one of two assembly initiator proteins, it binds directly to the 5'-end of the 23S rRNA, where it nucleates assembly of the 50S subunit. Its function is as follows. One of the proteins that surrounds the polypeptide exit tunnel on the outside of the subunit. This is Large ribosomal subunit protein uL24 from Porphyromonas gingivalis (strain ATCC 33277 / DSM 20709 / CIP 103683 / JCM 12257 / NCTC 11834 / 2561).